The sequence spans 410 residues: uncharacterized protein (410 aa).

The N-terminal stretch at 1–41 (MVKSFRMKALIAGAAVAAAVSAGAVSDVPAAKVLQPTAAYA) is a signal peptide.

As to quaternary structure, interacts with PcrA, Pdp, YclM, YkvL, YhcQ and YomL. The interaction with PcrA is not essential for cell viability or repair of UV-induced lesions.

Its subcellular location is the secreted. Functionally, increases the processivity of the PcrA helicase, but does not bind to DNA. This is an uncharacterized protein from Bacillus subtilis (strain 168).